A 253-amino-acid chain; its full sequence is Phosphate import ATP-binding protein PstB (253 aa).

Residues 7–248 enclose the ABC transporter domain; it reads IDARDVNFWY…PEKEATQNYI (242 aa). 39–46 contacts ATP; sequence GPSGCGKS.

This sequence belongs to the ABC transporter superfamily. Phosphate importer (TC 3.A.1.7) family. In terms of assembly, the complex is composed of two ATP-binding proteins (PstB), two transmembrane proteins (PstC and PstA) and a solute-binding protein (PstS).

The protein resides in the cell inner membrane. The catalysed reaction is phosphate(out) + ATP + H2O = ADP + 2 phosphate(in) + H(+). Part of the ABC transporter complex PstSACB involved in phosphate import. Responsible for energy coupling to the transport system. The chain is Phosphate import ATP-binding protein PstB from Bacteroides fragilis (strain ATCC 25285 / DSM 2151 / CCUG 4856 / JCM 11019 / LMG 10263 / NCTC 9343 / Onslow / VPI 2553 / EN-2).